Here is a 1443-residue protein sequence, read N- to C-terminus: Sterol 3-beta-glucosyltransferase ATG26 (1443 aa).

Residues 1–13 show a composition bias toward low complexity; it reads MATQADDAAASQA. 2 disordered regions span residues 1-69 and 88-187; these read MATQ…MFMN and NDRF…LTLT. The segment covering 18–32 has biased composition (basic and acidic residues); the sequence is GDLKEHVHDELDKIQ. A compositionally biased stretch (acidic residues) spans 49–58; it reads DSEDSDDEDN. Over residues 104-117 the composition is skewed to polar residues; that stretch reads QNTRTESIARTSIL. Over residues 125–134 the composition is skewed to basic residues; the sequence is DKVHRRRKLS. The span at 164-173 shows a compositional bias: acidic residues; it reads EVADEADDEH. Residues 240–284 form the GRAM 1 domain; it reads LKEIFEFDEYEQVIEEYPCWLLQSVLLQGYMYITSKHICFYAYLP. The PH domain occupies 289–385; the sequence is EAVKSGYLSK…WVKSLQRVIF (97 aa). The tract at residues 463–657 is disordered; sequence EQVITGDDHD…HGDRHHGIPH (195 aa). Residues 506 to 525 are compositionally biased toward low complexity; that stretch reads LAPMSPLSPRSPSQLSPRAS. Residues 585-614 are compositionally biased toward polar residues; sequence SFLQSSIENPSISTLSPSSYDEPSASQILQ. Residues 631 to 642 are compositionally biased toward basic residues; the sequence is SRKRDRSGKRTP. In terms of domain architecture, GRAM 2 spans 765-870; that stretch reads RFRAHFALPE…DCAVTLHQLM (106 aa). Residues 883 to 910 adopt a coiled-coil conformation; sequence DQEEQDDEEAAAAMAERDELQEARQDEF. UDP-alpha-D-glucose contacts are provided by Ser-957, Arg-958, Asp-960, Ala-1265, His-1267, His-1280, Ser-1283, Gly-1284, Thr-1285, Asp-1304, and Gln-1305. The tract at residues 1385 to 1443 is disordered; sequence NAEHGLAEDDDDTEESWTFVGRDEPDPDAVTKKLSDGLAGLGAAGDRPPPLGSQAPTVA. Over residues 1405–1419 the composition is skewed to basic and acidic residues; sequence GRDEPDPDAVTKKLS.

It belongs to the glycosyltransferase 28 family.

It localises to the cytoplasm. Its subcellular location is the preautophagosomal structure membrane. The catalysed reaction is a sterol + UDP-alpha-D-glucose = a sterol 3-beta-D-glucoside + UDP + H(+). It carries out the reaction ergosterol + UDP-alpha-D-glucose = ergosteryl 3-beta-D-glucoside + UDP + H(+). Sterol glycosyltransferase responsible for the glycosylation of ergosterol to form ergosterol-glucoside. The protein is Sterol 3-beta-glucosyltransferase ATG26 of Gibberella zeae (strain ATCC MYA-4620 / CBS 123657 / FGSC 9075 / NRRL 31084 / PH-1) (Wheat head blight fungus).